We begin with the raw amino-acid sequence, 174 residues long: Urease accessory protein UreE (174 aa).

It belongs to the UreE family.

The protein resides in the cytoplasm. Its function is as follows. Involved in urease metallocenter assembly. Binds nickel. Probably functions as a nickel donor during metallocenter assembly. The chain is Urease accessory protein UreE from Helicobacter hepaticus (strain ATCC 51449 / 3B1).